Here is a 360-residue protein sequence, read N- to C-terminus: DNA replication and repair protein RecF (360 aa).

30 to 37 contributes to the ATP binding site; that stretch reads GANGSGKT.

It belongs to the RecF family.

The protein resides in the cytoplasm. Functionally, the RecF protein is involved in DNA metabolism; it is required for DNA replication and normal SOS inducibility. RecF binds preferentially to single-stranded, linear DNA. It also seems to bind ATP. This Acinetobacter baumannii (strain AB307-0294) protein is DNA replication and repair protein RecF.